We begin with the raw amino-acid sequence, 288 residues long: Ribosomal RNA small subunit methyltransferase I (288 aa).

Belongs to the methyltransferase superfamily. RsmI family.

It localises to the cytoplasm. The enzyme catalyses cytidine(1402) in 16S rRNA + S-adenosyl-L-methionine = 2'-O-methylcytidine(1402) in 16S rRNA + S-adenosyl-L-homocysteine + H(+). Functionally, catalyzes the 2'-O-methylation of the ribose of cytidine 1402 (C1402) in 16S rRNA. The protein is Ribosomal RNA small subunit methyltransferase I of Vibrio cholerae serotype O1 (strain ATCC 39315 / El Tor Inaba N16961).